The primary structure comprises 345 residues: Isocitrate lyase (345 aa).

58-60 (SGY) lines the substrate pocket. Mg(2+) is bound at residue Asp-98. Catalysis depends on Cys-135, which acts as the Proton acceptor. Residues 136–137 (GH), Arg-170, 230–234 (NYSSS), and Thr-260 contribute to the substrate site. The interval 318–345 (DPEARRRIEESEGFSEEQADPITSNDDD) is disordered. The span at 328–345 (SEGFSEEQADPITSNDDD) shows a compositional bias: acidic residues.

Homotetramer or homotrimer. The cofactor is Mg(2+).

The catalysed reaction is D-threo-isocitrate = glyoxylate + succinate. The protein operates within carbohydrate metabolism; glyoxylate cycle; (S)-malate from isocitrate: step 1/2. Involved in the metabolic adaptation in response to environmental changes. Catalyzes the reversible formation of succinate and glyoxylate from isocitrate, a key step of the glyoxylate cycle, which operates as an anaplerotic route for replenishing the tricarboxylic acid cycle during growth on fatty acid substrates. In Haloferax volcanii (strain ATCC 29605 / DSM 3757 / JCM 8879 / NBRC 14742 / NCIMB 2012 / VKM B-1768 / DS2) (Halobacterium volcanii), this protein is Isocitrate lyase (aceA).